A 77-amino-acid polypeptide reads, in one-letter code: Secapin (77 aa).

The first 32 residues, M1–A32, serve as a signal peptide directing secretion. A propeptide spanning residues V33–R52 is cleaved from the precursor. C61 and C72 form a disulfide bridge.

It belongs to the secapin family. As to expression, expressed by the venom gland.

It localises to the secreted. Its function is as follows. Nontoxic peptide. This is Secapin from Vespa magnifica (Hornet).